The primary structure comprises 484 residues: Siroheme synthase 1 (484 aa).

Residues 1–205 (MHHYPIFLKL…GREAEGEAEL (205 aa)) form a precorrin-2 dehydrogenase /sirohydrochlorin ferrochelatase region. Residues 22 to 23 (EA) and 43 to 44 (PV) contribute to the NAD(+) site. Serine 130 carries the post-translational modification Phosphoserine. The segment at 220–484 (GEVFLVGAGP…DPCWTGGMRD (265 aa)) is uroporphyrinogen-III C-methyltransferase. Proline 229 is a binding site for S-adenosyl-L-methionine. Aspartate 252 acts as the Proton acceptor in catalysis. Lysine 274 serves as the catalytic Proton donor. Residues 305 to 307 (GGD), leucine 310, 335 to 336 (SA), methionine 387, and alanine 416 each bind S-adenosyl-L-methionine.

In the N-terminal section; belongs to the precorrin-2 dehydrogenase / sirohydrochlorin ferrochelatase family. The protein in the C-terminal section; belongs to the precorrin methyltransferase family.

It carries out the reaction uroporphyrinogen III + 2 S-adenosyl-L-methionine = precorrin-2 + 2 S-adenosyl-L-homocysteine + H(+). It catalyses the reaction precorrin-2 + NAD(+) = sirohydrochlorin + NADH + 2 H(+). The enzyme catalyses siroheme + 2 H(+) = sirohydrochlorin + Fe(2+). Its pathway is cofactor biosynthesis; adenosylcobalamin biosynthesis; precorrin-2 from uroporphyrinogen III: step 1/1. It functions in the pathway cofactor biosynthesis; adenosylcobalamin biosynthesis; sirohydrochlorin from precorrin-2: step 1/1. The protein operates within porphyrin-containing compound metabolism; siroheme biosynthesis; precorrin-2 from uroporphyrinogen III: step 1/1. It participates in porphyrin-containing compound metabolism; siroheme biosynthesis; siroheme from sirohydrochlorin: step 1/1. Its pathway is porphyrin-containing compound metabolism; siroheme biosynthesis; sirohydrochlorin from precorrin-2: step 1/1. Functionally, multifunctional enzyme that catalyzes the SAM-dependent methylations of uroporphyrinogen III at position C-2 and C-7 to form precorrin-2 via precorrin-1. Then it catalyzes the NAD-dependent ring dehydrogenation of precorrin-2 to yield sirohydrochlorin. Finally, it catalyzes the ferrochelation of sirohydrochlorin to yield siroheme. This chain is Siroheme synthase 1, found in Halorhodospira halophila (strain DSM 244 / SL1) (Ectothiorhodospira halophila (strain DSM 244 / SL1)).